A 174-amino-acid chain; its full sequence is UPF0340 protein SAR2202 (174 aa).

Belongs to the UPF0340 family.

This Staphylococcus aureus (strain MRSA252) protein is UPF0340 protein SAR2202.